We begin with the raw amino-acid sequence, 177 residues long: NAD(P)H-quinone oxidoreductase subunit 6, chloroplastic (177 aa).

5 helical membrane-spanning segments follow: residues 10–30 (ILLVSLGSGLIVGGLGVVLLT), 32–52 (PIYSAFSSGLVLVCISLFYIP), 61–81 (AQLLIYVGAINVLILFAVMFM), 92–112 (FWTIGDGFTSVVCTSIFFSLI), and 152–172 (FYLPFELISIILLVSLVGAIA).

This sequence belongs to the complex I subunit 6 family. In terms of assembly, NDH is composed of at least 16 different subunits, 5 of which are encoded in the nucleus.

The protein localises to the plastid. It is found in the chloroplast thylakoid membrane. It catalyses the reaction a plastoquinone + NADH + (n+1) H(+)(in) = a plastoquinol + NAD(+) + n H(+)(out). The enzyme catalyses a plastoquinone + NADPH + (n+1) H(+)(in) = a plastoquinol + NADP(+) + n H(+)(out). NDH shuttles electrons from NAD(P)H:plastoquinone, via FMN and iron-sulfur (Fe-S) centers, to quinones in the photosynthetic chain and possibly in a chloroplast respiratory chain. The immediate electron acceptor for the enzyme in this species is believed to be plastoquinone. Couples the redox reaction to proton translocation, and thus conserves the redox energy in a proton gradient. The polypeptide is NAD(P)H-quinone oxidoreductase subunit 6, chloroplastic (ndhG) (Nuphar advena (Common spatterdock)).